The sequence spans 366 residues: Alanine racemase (366 aa).

Residue Lys-40 is the Proton acceptor; specific for D-alanine of the active site. Lys-40 is modified (N6-(pyridoxal phosphate)lysine). Arg-136 lines the substrate pocket. Catalysis depends on Tyr-263, which acts as the Proton acceptor; specific for L-alanine. Met-310 lines the substrate pocket.

The protein belongs to the alanine racemase family. The cofactor is pyridoxal 5'-phosphate.

It catalyses the reaction L-alanine = D-alanine. It functions in the pathway amino-acid biosynthesis; D-alanine biosynthesis; D-alanine from L-alanine: step 1/1. Catalyzes the interconversion of L-alanine and D-alanine. May also act on other amino acids. This is Alanine racemase (alr) from Streptococcus pyogenes serotype M1.